The primary structure comprises 3301 residues: Cadherin EGF LAG seven-pass G-type receptor 3 (3301 aa).

An N-terminal signal peptide occupies residues 1-31; that stretch reads MARRPLWWGLPGPSTPVLLLLLLSLFPFSRE. Residues 32–2531 lie on the Extracellular side of the membrane; the sequence is ELGGGGDQDW…RLEGDLELLA (2500 aa). Disordered stretches follow at residues 148-189 and 202-314; these read LPLD…ARRS and KLWE…NRHP. Positions 267–276 are enriched in basic residues; it reads MRSRGLFRRR. Cadherin domains are found at residues 317-424, 425-536, 537-642, 643-747, 748-849, 850-952, 953-1058, 1059-1160, and 1161-1257; these read PQYN…APVF, EQAQ…APQF, SEKR…APIF, VSTP…RPEF, TMKE…RPVF, QSAH…APQF, VASH…APVF, PAEE…SPVL, and NNFQ…VVII. N-linked (GlcNAc...) asparagine glycosylation occurs at Asn623. N-linked (GlcNAc...) asparagine glycosylation is present at Asn838. N-linked (GlcNAc...) asparagine glycans are attached at residues Asn1173, Asn1213, Asn1308, and Asn1318. An EGF-like 1; calcium-binding domain is found at 1366–1424; that stretch reads DDNVCLREPCENYMKCVSVLRFDSSAPFLASTSTLFRPIQPIAGLRCRCPPGFTGDFCE. Disulfide bonds link Cys1370–Cys1381, Cys1375–Cys1412, Cys1414–Cys1423, Cys1430–Cys1441, Cys1435–Cys1450, Cys1452–Cys1459, Cys1468–Cys1479, Cys1473–Cys1489, and Cys1491–Cys1502. An EGF-like 2; calcium-binding domain is found at 1426 to 1460; sequence ELDLCYSNPCRNGGACARREGGYTCVCRPRFTDCE. An EGF-like 3; calcium-binding domain is found at 1464–1503; the sequence is EAGRCVPGVCRNGGTCTNAPNGGFRCQCPAGGAFEGPRCE. The 205-residue stretch at 1504–1708 folds into the Laminin G-like 1 domain; that stretch reads VAARSFPPSS…VANNGTMAGC (205 aa). 2 N-linked (GlcNAc...) asparagine glycosylation sites follow: Asn1638 and Asn1702. Disulfide bonds link Cys1682-Cys1708, Cys1715-Cys1726, Cys1720-Cys1735, and Cys1737-Cys1746. Residues 1711–1747 form the EGF-like 4; calcium-binding domain; sequence KSHFCASGPCKNNGFCSERWGGFSCDCPVGFGGKDCR. One can recognise a Laminin G-like 2 domain in the interval 1751-1933; the sequence is AHPYHFQGNG…SHRVNVEPGC (183 aa). Residue Asn1759 is glycosylated (N-linked (GlcNAc...) asparagine). 9 disulfide bridges follow: Cys1904-Cys1933, Cys1939-Cys1950, Cys1944-Cys1959, Cys1961-Cys1970, Cys1974-Cys1985, Cys1979-Cys1997, Cys1999-Cys2008, Cys2016-Cys2029, and Cys2031-Cys2041. Residues 1935-1971 enclose the EGF-like 5; calcium-binding domain; the sequence is VTNPCASGPCPPHADCKDLWQTFSCTCRPGYYGPGCV. Asp1952 carries the post-translational modification (3R)-3-hydroxyaspartate. The 31-residue stretch at 1972–2002 folds into the EGF-like 6; calcium-binding domain; the sequence is DACLLNPCQNQGSCRHLQGAPHGYTCDCVSG. An EGF-like 7; calcium-binding domain is found at 2003–2042; the sequence is YFGQHCEHRVDQQCPRGWWGSPTCGPCNCDVHKGFDPNCN. Asn2042 carries an N-linked (GlcNAc...) asparagine glycan. The EGF-like 8; calcium-binding domain maps to 2044-2079; that stretch reads TNGQCHCKEFHYRPRGSDSCLPCDCYPVGSTSRSCA. 5 cysteine pairs are disulfide-bonded: Cys2048-Cys2063, Cys2050-Cys2066, Cys2068-Cys2078, Cys2087-Cys2096, and Cys2099-Cys2111. Positions 2066–2113 constitute a Laminin EGF-like domain; that stretch reads CDCYPVGSTSRSCAPHSGQCPCRPGALGRQCNSCDSPFAEVTASGCRV. Position 2115 is a phosphotyrosine (Tyr2115). Asn2166, Asn2185, Asn2375, Asn2465, and Asn2497 each carry an N-linked (GlcNAc...) asparagine glycan. The segment at 2353–2388 is disordered; it reads LLPSQASQPSPSEVLPTSSNAENATASSVVSPPAPL. The span at 2355 to 2383 shows a compositional bias: low complexity; it reads PSQASQPSPSEVLPTSSNAENATASSVVS. The 165-residue stretch at 2357–2521 folds into the GAIN-B domain; it reads QASQPSPSEV…GVLMDASPRE (165 aa). 2 cysteine pairs are disulfide-bonded: Cys2471–Cys2503 and Cys2491–Cys2505. The segment at 2471 to 2521 is GPS; that stretch reads CVQWDPPGPTDQHGMWTARDCELVHRNGSHARCRCSRTGTFGVLMDASPRE. A helical membrane pass occupies residues 2532–2552; sequence VFTHVVVAVSVTALVLTAAVL. Topologically, residues 2553–2563 are cytoplasmic; that stretch reads LSLRSLKSNVR. Residues 2564-2584 form a helical membrane-spanning segment; it reads GIHANVAAALGVAELLFLLGI. Over 2585-2592 the chain is Extracellular; the sequence is HRTHNQLL. The helical transmembrane segment at 2593–2613 threads the bilayer; that stretch reads CTAVAILLHYFFLSTFAWLLV. At 2614-2634 the chain is on the cytoplasmic side; it reads QGLHLYRMQVEPRNVDRGAMR. A helical transmembrane segment spans residues 2635 to 2655; that stretch reads FYHALGWGVPAVLLGLAVGLD. Over 2656–2673 the chain is Extracellular; it reads PEGYGNPDFCWISIHEPL. A helical membrane pass occupies residues 2674-2694; that stretch reads IWSFAGPIVLVIVMNGTMFLL. Residues 2695–2716 lie on the Cytoplasmic side of the membrane; sequence AARTSCSTGQREAKKTSVLTLR. Residues 2717-2737 form a helical membrane-spanning segment; that stretch reads SSFLLLLLVSASWLFGLLAVN. Topologically, residues 2738–2744 are extracellular; that stretch reads HSILAFH. Residues 2745 to 2765 traverse the membrane as a helical segment; the sequence is YLHAGLCGLQGLAVLLLFCVL. Residues 2766–3301 are Cytoplasmic-facing; that stretch reads NADARAAWTP…SEVPRSEGHS (536 aa). 3 disordered regions span residues 2823-2844, 2879-2919, and 2969-2992; these read SSAR…YLRD, AGAD…RPLR, and SNKD…TSLG. Acidic residues predominate over residues 2881–2891; the sequence is ADSDSDSDLSL. Basic residues predominate over residues 2910 to 2919; that stretch reads TRGRFQRPLR. At Tyr3042 the chain carries Phosphotyrosine. Residues 3083–3301 are disordered; that stretch reads APVLHPLSRP…SEVPRSEGHS (219 aa). Phosphoserine is present on Ser3090. Basic and acidic residues predominate over residues 3094–3111; it reads SQERLDTAPARLEARDRG. Low complexity-rich tracts occupy residues 3168 to 3189 and 3239 to 3261; these read SPQR…SLSR and LSSI…STPS. The span at 3276 to 3289 shows a compositional bias: polar residues; sequence TPRSATSHSISELS.

The protein belongs to the G-protein coupled receptor 2 family. LN-TM7 subfamily. Expressed in the CNS and in the eye.

The protein resides in the cell membrane. In terms of biological role, receptor that may have an important role in cell/cell signaling during nervous system formation. The chain is Cadherin EGF LAG seven-pass G-type receptor 3 (Celsr3) from Mus musculus (Mouse).